The following is a 100-amino-acid chain: Putative PIN1-like protein (100 aa).

The segment covering 1 to 15 (MADEEKLPPGWEKRM) has biased composition (basic and acidic residues). 2 disordered regions span residues 1–52 (MADE…QGEP) and 69–100 (LDLAAGNHPDQGGGPGADQRLHPEDQGRREGL). The WW domain maps to 5–38 (EKLPPGWEKRMSRPSGRGYYFNHITNPSQWERPS). Polar residues predominate over residues 27–44 (HITNPSQWERPSGNSSSG). A compositionally biased stretch (basic and acidic residues) spans 87–100 (QRLHPEDQGRREGL).

The polypeptide is Putative PIN1-like protein (PIN1P1) (Homo sapiens (Human)).